Consider the following 277-residue polypeptide: Digeranylgeranylglyceryl phosphate synthase (277 aa).

The next 7 membrane-spanning stretches (helical) occupy residues 13–33 (PGNA…AGGL), 40–60 (AFAV…NDYF), 89–109 (VALF…AIAI), 143–163 (FLYG…LFAL), 199–219 (RSLY…PLPY), 220–240 (LLGL…CGLA), and 256–276 (WLKA…LAVV).

The protein belongs to the UbiA prenyltransferase family. DGGGP synthase subfamily. It depends on Mg(2+) as a cofactor.

The protein resides in the cell membrane. It carries out the reaction sn-3-O-(geranylgeranyl)glycerol 1-phosphate + (2E,6E,10E)-geranylgeranyl diphosphate = 2,3-bis-O-(geranylgeranyl)-sn-glycerol 1-phosphate + diphosphate. It participates in membrane lipid metabolism; glycerophospholipid metabolism. Its function is as follows. Prenyltransferase that catalyzes the transfer of the geranylgeranyl moiety of geranylgeranyl diphosphate (GGPP) to the C2 hydroxyl of (S)-3-O-geranylgeranylglyceryl phosphate (GGGP). This reaction is the second ether-bond-formation step in the biosynthesis of archaeal membrane lipids. The sequence is that of Digeranylgeranylglyceryl phosphate synthase from Natronomonas pharaonis (strain ATCC 35678 / DSM 2160 / CIP 103997 / JCM 8858 / NBRC 14720 / NCIMB 2260 / Gabara) (Halobacterium pharaonis).